Here is a 263-residue protein sequence, read N- to C-terminus: Ubiquinone/menaquinone biosynthesis C-methyltransferase UbiE (263 aa).

3 residues coordinate S-adenosyl-L-methionine: Thr86, Asp107, and Ser152.

It belongs to the class I-like SAM-binding methyltransferase superfamily. MenG/UbiE family.

The enzyme catalyses a 2-demethylmenaquinol + S-adenosyl-L-methionine = a menaquinol + S-adenosyl-L-homocysteine + H(+). It carries out the reaction a 2-methoxy-6-(all-trans-polyprenyl)benzene-1,4-diol + S-adenosyl-L-methionine = a 5-methoxy-2-methyl-3-(all-trans-polyprenyl)benzene-1,4-diol + S-adenosyl-L-homocysteine + H(+). Its pathway is quinol/quinone metabolism; menaquinone biosynthesis; menaquinol from 1,4-dihydroxy-2-naphthoate: step 2/2. It functions in the pathway cofactor biosynthesis; ubiquinone biosynthesis. In terms of biological role, methyltransferase required for the conversion of demethylmenaquinol (DMKH2) to menaquinol (MKH2) and the conversion of 2-polyprenyl-6-methoxy-1,4-benzoquinol (DDMQH2) to 2-polyprenyl-3-methyl-6-methoxy-1,4-benzoquinol (DMQH2). The chain is Ubiquinone/menaquinone biosynthesis C-methyltransferase UbiE from Brucella anthropi (strain ATCC 49188 / DSM 6882 / CCUG 24695 / JCM 21032 / LMG 3331 / NBRC 15819 / NCTC 12168 / Alc 37) (Ochrobactrum anthropi).